We begin with the raw amino-acid sequence, 576 residues long: uncharacterized protein (576 aa).

An N-terminal signal peptide occupies residues 1–28; it reads MLRLNGLRVLLRTLAAIGALLTTASASA. Catalysis depends on serine 185, which acts as the Acyl-ester intermediate. 2 disulfide bridges follow: cysteine 252/cysteine 269 and cysteine 278/cysteine 286. Residues aspartate 253, aspartate 256, aspartate 260, and valine 262 each coordinate Ca(2+). Active-site charge relay system residues include aspartate 414 and histidine 464. A disulfide bridge links cysteine 529 with cysteine 551.

It belongs to the tannase family.

This is an uncharacterized protein from Xanthomonas campestris pv. campestris (strain ATCC 33913 / DSM 3586 / NCPPB 528 / LMG 568 / P 25).